The following is a 342-amino-acid chain: tRNA N6-adenosine threonylcarbamoyltransferase (342 aa).

Residues His-111 and His-115 each contribute to the Fe cation site. Residues Leu-134–Gly-138, Asp-167, Gly-180, and Asn-277 each bind substrate. Residue Asp-305 coordinates Fe cation.

The protein belongs to the KAE1 / TsaD family. Fe(2+) serves as cofactor.

It localises to the cytoplasm. It carries out the reaction L-threonylcarbamoyladenylate + adenosine(37) in tRNA = N(6)-L-threonylcarbamoyladenosine(37) in tRNA + AMP + H(+). Required for the formation of a threonylcarbamoyl group on adenosine at position 37 (t(6)A37) in tRNAs that read codons beginning with adenine. Is involved in the transfer of the threonylcarbamoyl moiety of threonylcarbamoyl-AMP (TC-AMP) to the N6 group of A37, together with TsaE and TsaB. TsaD likely plays a direct catalytic role in this reaction. The sequence is that of tRNA N6-adenosine threonylcarbamoyltransferase from Cellvibrio japonicus (strain Ueda107) (Pseudomonas fluorescens subsp. cellulosa).